A 325-amino-acid polypeptide reads, in one-letter code: Hydroxylase/desaturase poxK (325 aa).

A compositionally biased stretch (low complexity) spans 1–12; it reads MTATATPVPTVA. Residues 1–25 form a disordered region; the sequence is MTATATPVPTVASHAQDITLPPPPK.

This sequence belongs to the asaB hydroxylase/desaturase family.

The protein operates within secondary metabolite biosynthesis. Hydroxylase/desaturase; part of the gene cluster that mediates the biosynthesis of oxaleimides, cytotoxic compounds containing an unusual disubstituted succinimide moiety. The first step of the pathway is provided by the HR-PKS poxF that serves in a new mode of collaborative biosynthesis with the PKS-NRPS poxE, by providing the olefin containing amino acid substrate via the synthesis of an ACP-bound dec-4-enoate. The cytochrome P450 monooxygenase poxM-catalyzed oxidation at the alpha-position creates the enzyme-bound 2-hydroxydec-4-enoyl-ACP thioester, which may be prone to spontaneous hydrolysis to yield 2-hydroxydec-4-enoic acid due to increased electrophilicity of the carbonyl. 2-hydroxydec-4-enoic acid can then be further oxidized by poxM to yield the alpha-ketoacid 2-oxodec-4-enoicacid, which is reductively aminated by the aminotransferase poxL to yield (S,E)-2-aminodec-4-enoic acid. The Hybrid PKS-NRPS synthetase poxE then performs condensation between the octaketide product of its PKS modules and the amino group of (S,E)-2-aminodec-4-enoic acid which is activated and incorporated by the adenylation domain. The resulting aminoacyl product can be cyclized by the Diels-Alderase PoxQ and reductively released by the reductive (R) domain of poxE to yield an aldehyde intermediate. The released aldehyde is then substrate for a Knoevenagel condensation by the hydrolyase poxO followed by an oxidation at the 5-position of the pyrrolidone ring. The presence of the olefin from the amino acid building block allows for migration of the substituted allyl group to occur. This allylic transposition reaction takes place in a conjugate addition, semipinacol-like fashion to yield a succinimide intermediate. Iterative two-electron oxidations of the C7 methyl of the succinimide intermediate to the carboxylic acid can be catalyzed by one of two remaining cytochrome P450 monooxygenasess poxC or poxD to yield oxaleimide A. Subsequent oxidation yields the maleimide scaffold oxaleimide I. Both oxaleimide A and oxaleimide I can undergo oxidative modifications in the decalin ring to yield the series of products oxaleimides B to H. The chain is Hydroxylase/desaturase poxK from Penicillium oxalicum (strain 114-2 / CGMCC 5302) (Penicillium decumbens).